The sequence spans 149 residues: Protegrin-1 (149 aa).

Residues 1–29 (METQRASLCLGRWSLWLLLLALVVPSASA) form the signal peptide. Positions 30–130 (QALSYREAVL…DITCNEVQGV (101 aa)) are excised as a propeptide. The segment at 61–80 (DQPPKADEDPGTPKPVSFTV) is disordered. 4 cysteine pairs are disulfide-bonded: cysteine 85-cysteine 96, cysteine 107-cysteine 124, cysteine 136-cysteine 145, and cysteine 138-cysteine 143. Arginine 148 bears the Arginine amide mark.

Belongs to the cathelicidin family.

The protein localises to the secreted. Microbicidal activity. Active against E.coli, Listeria monocytogenes and C.albicans, in vitro. The polypeptide is Protegrin-1 (NPG1) (Sus scrofa (Pig)).